We begin with the raw amino-acid sequence, 59 residues long: Large ribosomal subunit protein bL32 (59 aa).

A disordered region spans residues 1–20 (MAVPRNRHSNARKNIRRSHH).

Belongs to the bacterial ribosomal protein bL32 family.

The polypeptide is Large ribosomal subunit protein bL32 (rpmF) (Chlamydia muridarum (strain MoPn / Nigg)).